Here is a 465-residue protein sequence, read N- to C-terminus: G1/S-specific cyclin CLN3 (465 aa).

One can recognise a Cyclin N-terminal domain in the interval 44–171 (EMLHHLLSVE…HILKSLEWVV (128 aa)).

The protein belongs to the cyclin family. As to quaternary structure, interacts with CDC28 and SLA1. Post-translationally, hyperphosphorylated. GRR1 preferentially mediates the degradation of hyperphosphorylated CLN3.

G1/S-specific cyclin essential for the control of the cell cycle at the G1/S (start) transition. CLN3 may be an upstream activator of the G1 cyclins which directly catalyze start. Required for budding and for cell cycle progression and morphogenesis in environment-induced hyphae. Degradation is mediated by GRR1. Through binding to CDC28, controls the phosphorylation of SLA1 which regulates cortical actin patch dynamics. The sequence is that of G1/S-specific cyclin CLN3 (CLN3) from Candida albicans (strain SC5314 / ATCC MYA-2876) (Yeast).